Here is a 201-residue protein sequence, read N- to C-terminus: MAVAIEAPFHVLAVDDSLPDRKLIERLLKTSSFQVTTVDSGSKALEFLGLHDHEDSPISTQSDQQEVAVNLIITDYCMPGMTGYDLLKKIKESSYLRDIPVVIMSSDNIPSRINRCLEEGADEFFLKPVRLSDMSKLKPHILKSRCKEHYQQEQNLQSNSESNNSSNPTSENSSSSTSSNSHKRKAVDEEILPHTIRPRHS.

Residues 10 to 142 (HVLAVDDSLP…DMSKLKPHIL (133 aa)) form the Response regulatory domain. D75 is modified (4-aspartylphosphate). The disordered stretch occupies residues 149–201 (HYQQEQNLQSNSESNNSSNPTSENSSSSTSSNSHKRKAVDEEILPHTIRPRHS). Low complexity predominate over residues 158 to 180 (SNSESNNSSNPTSENSSSSTSSN).

This sequence belongs to the ARR family. Type-A subfamily. In terms of processing, two-component system major event consists of a His-to-Asp phosphorelay between a sensor histidine kinase (HK) and a response regulator (RR). In plants, the His-to-Asp phosphorelay involves an additional intermediate named Histidine-containing phosphotransfer protein (HPt). This multistep phosphorelay consists of a His-Asp-His-Asp sequential transfer of a phosphate group between first a His and an Asp of the HK protein, followed by the transfer to a conserved His of the HPt protein and finally the transfer to an Asp in the receiver domain of the RR protein.

Functionally, functions as a response regulator involved in His-to-Asp phosphorelay signal transduction system. Phosphorylation of the Asp residue in the receiver domain activates the ability of the protein to promote the transcription of target genes. Type-A response regulators seem to act as negative regulators of the cytokinin signaling. This chain is Two-component response regulator ORR9, found in Oryza sativa subsp. japonica (Rice).